A 165-amino-acid polypeptide reads, in one-letter code: Ribosomal RNA large subunit methyltransferase H (165 aa).

Glycine 109 is an S-adenosyl-L-methionine binding site.

The protein belongs to the RNA methyltransferase RlmH family. In terms of assembly, homodimer.

It is found in the cytoplasm. It carries out the reaction pseudouridine(1915) in 23S rRNA + S-adenosyl-L-methionine = N(3)-methylpseudouridine(1915) in 23S rRNA + S-adenosyl-L-homocysteine + H(+). Functionally, specifically methylates the pseudouridine at position 1915 (m3Psi1915) in 23S rRNA. This is Ribosomal RNA large subunit methyltransferase H from Methylorubrum extorquens (strain CM4 / NCIMB 13688) (Methylobacterium extorquens).